The primary structure comprises 267 residues: 4-hydroxy-tetrahydrodipicolinate reductase (267 aa).

Residue 8 to 13 coordinates NAD(+); that stretch reads GAAGRM. Arg-35 lines the NADP(+) pocket. NAD(+) is bound by residues 98 to 100 and 122 to 125; these read GTT and AANF. His-155 serves as the catalytic Proton donor/acceptor. His-156 contacts (S)-2,3,4,5-tetrahydrodipicolinate. Lys-159 functions as the Proton donor in the catalytic mechanism. Residue 165–166 participates in (S)-2,3,4,5-tetrahydrodipicolinate binding; it reads GT.

Belongs to the DapB family.

The protein localises to the cytoplasm. The catalysed reaction is (S)-2,3,4,5-tetrahydrodipicolinate + NAD(+) + H2O = (2S,4S)-4-hydroxy-2,3,4,5-tetrahydrodipicolinate + NADH + H(+). The enzyme catalyses (S)-2,3,4,5-tetrahydrodipicolinate + NADP(+) + H2O = (2S,4S)-4-hydroxy-2,3,4,5-tetrahydrodipicolinate + NADPH + H(+). Its pathway is amino-acid biosynthesis; L-lysine biosynthesis via DAP pathway; (S)-tetrahydrodipicolinate from L-aspartate: step 4/4. Its function is as follows. Catalyzes the conversion of 4-hydroxy-tetrahydrodipicolinate (HTPA) to tetrahydrodipicolinate. This is 4-hydroxy-tetrahydrodipicolinate reductase from Azotobacter vinelandii (strain DJ / ATCC BAA-1303).